The following is a 189-amino-acid chain: Large ribosomal subunit protein uL5c (189 aa).

This sequence belongs to the universal ribosomal protein uL5 family. In terms of assembly, part of the 50S ribosomal subunit; contacts the 5S rRNA.

It is found in the plastid. It localises to the chloroplast. Binds 5S rRNA, forms part of the central protuberance of the 50S subunit. The chain is Large ribosomal subunit protein uL5c (rpl5) from Chara vulgaris (Common stonewort).